Reading from the N-terminus, the 426-residue chain is 5-methylthioadenosine/S-adenosylhomocysteine deaminase (426 aa).

Residues H60 and H62 each contribute to the Zn(2+) site. The substrate site is built by E89 and H179. H206 serves as a coordination point for Zn(2+). Positions 209 and 294 each coordinate substrate. D294 contacts Zn(2+).

This sequence belongs to the metallo-dependent hydrolases superfamily. MTA/SAH deaminase family. It depends on Zn(2+) as a cofactor.

It catalyses the reaction S-adenosyl-L-homocysteine + H2O + H(+) = S-inosyl-L-homocysteine + NH4(+). It carries out the reaction S-methyl-5'-thioadenosine + H2O + H(+) = S-methyl-5'-thioinosine + NH4(+). Its function is as follows. Catalyzes the deamination of 5-methylthioadenosine and S-adenosyl-L-homocysteine into 5-methylthioinosine and S-inosyl-L-homocysteine, respectively. Is also able to deaminate adenosine. The chain is 5-methylthioadenosine/S-adenosylhomocysteine deaminase from Dictyoglomus thermophilum (strain ATCC 35947 / DSM 3960 / H-6-12).